The sequence spans 369 residues: Histidinol-phosphate aminotransferase 2 (369 aa).

At K229 the chain carries N6-(pyridoxal phosphate)lysine.

Belongs to the class-II pyridoxal-phosphate-dependent aminotransferase family. Histidinol-phosphate aminotransferase subfamily. As to quaternary structure, homodimer. Pyridoxal 5'-phosphate serves as cofactor.

It carries out the reaction L-histidinol phosphate + 2-oxoglutarate = 3-(imidazol-4-yl)-2-oxopropyl phosphate + L-glutamate. It functions in the pathway amino-acid biosynthesis; L-histidine biosynthesis; L-histidine from 5-phospho-alpha-D-ribose 1-diphosphate: step 7/9. The sequence is that of Histidinol-phosphate aminotransferase 2 (hisC2) from Pseudomonas aeruginosa (strain ATCC 15692 / DSM 22644 / CIP 104116 / JCM 14847 / LMG 12228 / 1C / PRS 101 / PAO1).